A 531-amino-acid polypeptide reads, in one-letter code: Importin subunit alpha-2 (531 aa).

Residues 1 to 10 (MTLTETSLSH) show a composition bias toward polar residues. Residues 1–88 (MTLTETSLSH…ISHQQSSTRL (88 aa)) form a disordered region. One can recognise an IBB domain in the interval 5 to 67 (ETSLSHNAEE…RNIVDVDEGG (63 aa)). Composition is skewed to basic and acidic residues over residues 11-20 (NAEEGKDEGG) and 29-50 (TKHEELRRRRTECSVEIRKQKG). Residues 62-75 (DVDEGGNSESELEE) are compositionally biased toward acidic residues. ARM repeat units lie at residues 122-161 (NPPIDEVIHCGLLQALVQALSVENERVQYEAAWALTNIVS), 164-203 (TEQTIAAVEAGVTIPLIHLSVHQSAQISEQALWAVANIAG), 250-290 (KNPH…YLTD), 293-331 (DEQIELARESGVLPHVVAFFKEAENLVAPALRTLGNVAT), 334-374 (DSLT…NIIA), 377-416 (QKQIQAVLDANLLPVLINVLKSGDHKCQFEASWALSNLAQ), and 420-459 (NRQVVAMLEDNVVPALCQALLQTNTDMLNNTLETLYTLML). The tract at residues 511 to 531 (DDAGEKESHENADPQDNKWSF) is disordered. Basic and acidic residues predominate over residues 515-531 (EKESHENADPQDNKWSF).

Belongs to the importin alpha family. In terms of assembly, forms a complex with an importin beta subunit. Interacts with akir-1. Germline tissues. Expressed exclusively in germ line cells from the early embryonic through adult stages.

It localises to the cytoplasm. The protein resides in the nucleus. It is found in the nucleus envelope. In terms of biological role, nuclear transport receptor that mediates nuclear import of proteins, and which is involved in sister chromatid cohesion. Binds specifically and directly to substrates containing either a simple or bipartite nuclear localization signals (NLS) motif. Promotes docking of import substrates to the nuclear envelope. Together with akir-1 adapter, required for the import and load of cohesin complex proteins in meiotic nuclei. This is Importin subunit alpha-2 from Caenorhabditis elegans.